We begin with the raw amino-acid sequence, 205 residues long: Holliday junction branch migration complex subunit RuvA (205 aa).

Residues 1 to 64 (MIGRLRGIIL…EDAQLLYGFN (64 aa)) are domain I. Positions 65-143 (DKQERALFRE…GLNGDLFNNT (79 aa)) are domain II. The flexible linker stretch occupies residues 144-156 (GDIQLPASNSSQI). The domain III stretch occupies residues 157-205 (SDADIEAEAASALVALGYKPQEASRLVSKIAKPGADCETLIRDALRAAL).

This sequence belongs to the RuvA family. As to quaternary structure, homotetramer. Forms an RuvA(8)-RuvB(12)-Holliday junction (HJ) complex. HJ DNA is sandwiched between 2 RuvA tetramers; dsDNA enters through RuvA and exits via RuvB. An RuvB hexamer assembles on each DNA strand where it exits the tetramer. Each RuvB hexamer is contacted by two RuvA subunits (via domain III) on 2 adjacent RuvB subunits; this complex drives branch migration. In the full resolvosome a probable DNA-RuvA(4)-RuvB(12)-RuvC(2) complex forms which resolves the HJ.

The protein localises to the cytoplasm. Its function is as follows. The RuvA-RuvB-RuvC complex processes Holliday junction (HJ) DNA during genetic recombination and DNA repair, while the RuvA-RuvB complex plays an important role in the rescue of blocked DNA replication forks via replication fork reversal (RFR). RuvA specifically binds to HJ cruciform DNA, conferring on it an open structure. The RuvB hexamer acts as an ATP-dependent pump, pulling dsDNA into and through the RuvAB complex. HJ branch migration allows RuvC to scan DNA until it finds its consensus sequence, where it cleaves and resolves the cruciform DNA. This chain is Holliday junction branch migration complex subunit RuvA, found in Yersinia enterocolitica serotype O:8 / biotype 1B (strain NCTC 13174 / 8081).